We begin with the raw amino-acid sequence, 1037 residues long: Outer dynein arm-docking complex subunit 2 (1037 aa).

2 stretches are compositionally biased toward basic and acidic residues: residues 316–334 (EEQQKDNQIFEKPKTEDGH) and 376–391 (SSIKDSQEEKQGKLEK). Disordered stretches follow at residues 316 to 353 (EEQQKDNQIFEKPKTEDGHSSVAGSEKSKIEKISFGKS) and 376 to 439 (SSIK…ANAD). ARM repeat units follow at residues 477-516 (ETCQLAIRDVGGLEVLINLLDTDEVKCKIGSLKILKEISH), 518-557 (PQIRRNIVDLGGLPIMVNILDSPHKSLKCLSAETIANVAK), 528-570 (GGLP…QHGG), 615-654 (HSNKEAIRKAGGIPLLARLLKTSHENMLIPVVGTLQECAS), 656-695 (ENYRAAIKAERIIENLVKNLNSENEQLQEHCAMAIYQCAE), 739-778 (KENVIKFREYKAIETLVGLLTDQPEEVLVNVVGALGECCQ), 821-860 (PESMAIIDRLDGVRLLWSLLKNPHPDVKASAAWALCPCIE), 864-903 (DAGEMVRSFVGGLELVVNLLKSDNKEVLASVCAAITNIAK), 905-944 (QENLAVITDHGVVPLLSKLANTNNDKLRRHLAEAISRCCM), and 946-985 (GRNRVAFGEHKAVAPLVRYLKSNDTNVHRATAQALYQLSE). N6-methyllysine is present on lysine 545.

Component of the outer dynein arm-docking complex along with ODAD1, ODAD3, and ODAD4. Interacts with CFAP61. In terms of tissue distribution, highly expressed in testis. In males, also detected at lower levels in lung, brain, liver and muscle. In females, detected in ovary.

It is found in the cytoplasm. The protein localises to the cytoskeleton. The protein resides in the cilium axoneme. It localises to the cilium basal body. In terms of biological role, component of the outer dynein arm-docking complex (ODA-DC) that mediates outer dynein arms (ODA) binding onto the doublet microtubule. Involved in mediating assembly of both ODAs and their axonemal docking complex onto ciliary microtubules. The sequence is that of Outer dynein arm-docking complex subunit 2 from Mus musculus (Mouse).